The following is a 429-amino-acid chain: Histidinol dehydrogenase (429 aa).

Residues Tyr127, Gln188, and Asn211 each coordinate NAD(+). The substrate site is built by Ser234, Gln256, and His259. Residues Gln256 and His259 each contribute to the Zn(2+) site. Residues Glu324 and His325 each act as proton acceptor in the active site. 4 residues coordinate substrate: His325, Asp358, Glu412, and His417. Asp358 provides a ligand contact to Zn(2+). His417 provides a ligand contact to Zn(2+).

This sequence belongs to the histidinol dehydrogenase family. The cofactor is Zn(2+).

It carries out the reaction L-histidinol + 2 NAD(+) + H2O = L-histidine + 2 NADH + 3 H(+). It participates in amino-acid biosynthesis; L-histidine biosynthesis; L-histidine from 5-phospho-alpha-D-ribose 1-diphosphate: step 9/9. In terms of biological role, catalyzes the sequential NAD-dependent oxidations of L-histidinol to L-histidinaldehyde and then to L-histidine. The sequence is that of Histidinol dehydrogenase from Bacillus cereus (strain ATCC 10987 / NRS 248).